Here is a 189-residue protein sequence, read N- to C-terminus: Probable pericyclase scpY (189 aa).

The protein belongs to the pericyclase pydY family.

It participates in mycotoxin biosynthesis. In terms of biological role, probable pericyclase; part of the gene scp cluster that mediates the biosynthesis of a hirsutellone-like compound that has still to be identified. This is Probable pericyclase scpY from Mollisia scopiformis (Conifer needle endophyte fungus).